We begin with the raw amino-acid sequence, 306 residues long: Probable histidinol-phosphatase (306 aa).

The protein belongs to the PHP hydrolase family. HisK subfamily.

The enzyme catalyses L-histidinol phosphate + H2O = L-histidinol + phosphate. The protein operates within amino-acid biosynthesis; L-histidine biosynthesis; L-histidine from 5-phospho-alpha-D-ribose 1-diphosphate: step 8/9. This is Probable histidinol-phosphatase from Schizosaccharomyces pombe (strain 972 / ATCC 24843) (Fission yeast).